Consider the following 433-residue polypeptide: Serine--tRNA ligase (433 aa).

239–241 provides a ligand contact to L-serine; the sequence is TAE. 270–272 is an ATP binding site; it reads RSE. Position 293 (Glu293) interacts with L-serine. 357–360 lines the ATP pocket; that stretch reads EISS. Ser393 provides a ligand contact to L-serine.

It belongs to the class-II aminoacyl-tRNA synthetase family. Type-1 seryl-tRNA synthetase subfamily. Homodimer. The tRNA molecule binds across the dimer.

It is found in the cytoplasm. It catalyses the reaction tRNA(Ser) + L-serine + ATP = L-seryl-tRNA(Ser) + AMP + diphosphate + H(+). The catalysed reaction is tRNA(Sec) + L-serine + ATP = L-seryl-tRNA(Sec) + AMP + diphosphate + H(+). It functions in the pathway aminoacyl-tRNA biosynthesis; selenocysteinyl-tRNA(Sec) biosynthesis; L-seryl-tRNA(Sec) from L-serine and tRNA(Sec): step 1/1. Its function is as follows. Catalyzes the attachment of serine to tRNA(Ser). Is also able to aminoacylate tRNA(Sec) with serine, to form the misacylated tRNA L-seryl-tRNA(Sec), which will be further converted into selenocysteinyl-tRNA(Sec). The chain is Serine--tRNA ligase from Sorangium cellulosum (strain So ce56) (Polyangium cellulosum (strain So ce56)).